Consider the following 493-residue polypeptide: Alpha-amylase-related protein (493 aa).

The N-terminal stretch at 1–19 (MFKLALTLTLCLAGSLSLA) is a signal peptide. A Pyrrolidone carboxylic acid modification is found at Gln-20. The cysteines at positions 47 and 103 are disulfide-linked. Positions 117, 168, and 177 each coordinate Ca(2+). Cys-156 and Cys-170 are disulfide-bonded. Chloride is bound at residue Arg-205. The active-site Nucleophile is the Asp-207. Residue His-211 participates in Ca(2+) binding. Residue Glu-244 is the Proton donor of the active site. Positions 307 and 342 each coordinate chloride. 3 cysteine pairs are disulfide-bonded: Cys-375/Cys-381, Cys-417/Cys-440, and Cys-447/Cys-459.

It belongs to the glycosyl hydrolase 13 family. As to quaternary structure, monomer. Requires Ca(2+) as cofactor. Chloride serves as cofactor.

Its subcellular location is the secreted. The enzyme catalyses Endohydrolysis of (1-&gt;4)-alpha-D-glucosidic linkages in polysaccharides containing three or more (1-&gt;4)-alpha-linked D-glucose units.. The chain is Alpha-amylase-related protein (Amyrel) from Drosophila teissieri (Fruit fly).